Consider the following 411-residue polypeptide: Argininosuccinate lyase (411 aa).

The protein belongs to the lyase 1 family. Argininosuccinate lyase subfamily.

Its subcellular location is the cytoplasm. It carries out the reaction 2-(N(omega)-L-arginino)succinate = fumarate + L-arginine. Its pathway is amino-acid biosynthesis; L-arginine biosynthesis; L-arginine from L-ornithine and carbamoyl phosphate: step 3/3. The sequence is that of Argininosuccinate lyase from Legionella pneumophila subsp. pneumophila (strain Philadelphia 1 / ATCC 33152 / DSM 7513).